Here is a 59-residue protein sequence, read N- to C-terminus: Conotoxin Ts-03 (59 aa).

An N-terminal signal peptide occupies residues 1 to 19 (MRCLPVFIILLLLIPSAAS). A propeptide spanning residues 20-47 (VAQPKTKDDVALASFYDNAKRTLQRHWA) is cleaved from the precursor.

It belongs to the conotoxin T superfamily. Contains 2 disulfide bonds that can be either 'C1-C3, C2-C4' or 'C1-C4, C2-C3', since these disulfide connectivities have been observed for conotoxins with cysteine framework V (for examples, see AC P0DQQ7 and AC P81755). Expressed by the venom duct.

The protein localises to the secreted. The chain is Conotoxin Ts-03 from Conus tessulatus (Tessellate cone).